Reading from the N-terminus, the 396-residue chain is Elongation factor Tu 1 (396 aa).

The region spanning 10-206 is the tr-type G domain; it reads KPHVNVGTIG…QIDSYIPEPE (197 aa). Residues 19-26 are G1; sequence GHIDHGKT. Residue 19-26 participates in GTP binding; sequence GHIDHGKT. Threonine 26 contributes to the Mg(2+) binding site. Residues 60–64 form a G2 region; the sequence is GITIA. Positions 81-84 are G3; that stretch reads DCPG. Residues 81-85 and 136-139 contribute to the GTP site; these read DCPGH and NKCD. Residues 136–139 are G4; that stretch reads NKCD. The G5 stretch occupies residues 174–176; sequence SAL.

Belongs to the TRAFAC class translation factor GTPase superfamily. Classic translation factor GTPase family. EF-Tu/EF-1A subfamily. In terms of assembly, monomer.

The protein localises to the cytoplasm. The catalysed reaction is GTP + H2O = GDP + phosphate + H(+). In terms of biological role, GTP hydrolase that promotes the GTP-dependent binding of aminoacyl-tRNA to the A-site of ribosomes during protein biosynthesis. The polypeptide is Elongation factor Tu 1 (Desulfotalea psychrophila (strain LSv54 / DSM 12343)).